The following is a 741-amino-acid chain: Type VI secretion system spike protein VgrG1b (741 aa).

2 stretches are compositionally biased toward polar residues: residues 614–629 (SIGA…NETI) and 649–663 (GNQS…SRSV). The interval 614 to 678 (SIGANRSESV…TSVGKDDSLD (65 aa)) is disordered.

Belongs to the VgrG protein family.

The protein resides in the secreted. In terms of biological role, part of the H1 type VI secretion system (H1-T6SS) specialized secretion system, which delivers several virulence factors in both prokaryotic and eukaryotic cells during infection. Allows the delivery of the Tse7 toxin to target cells where it exerts toxicity through its nuclease domain. The protein is Type VI secretion system spike protein VgrG1b of Pseudomonas aeruginosa (strain ATCC 15692 / DSM 22644 / CIP 104116 / JCM 14847 / LMG 12228 / 1C / PRS 101 / PAO1).